Here is a 674-residue protein sequence, read N- to C-terminus: L-type lectin-domain containing receptor kinase IV.3 (674 aa).

A signal peptide spans 1–22 (MFFKLFTIFFFFIILLSKPLNS). N-linked (GlcNAc...) asparagine glycans are attached at residues Asn21, Asn28, Asn40, Asn81, Asn136, and Asn188. Topologically, residues 23–296 (SSQSLNFTYN…TSLQRFYKNR (274 aa)) are extracellular. A legume-lectin like region spans residues 26 to 263 (SLNFTYNSFH…SEHFVFGWSF (238 aa)). A helical transmembrane segment spans residues 297–317 (MPLFSLLLIPVLFVVSLIFLV). At 318–674 (RFIVRRRRKF…IAYSIVSGGR (357 aa)) the chain is on the cytoplasmic side. The 278-residue stretch at 355–632 (FKDKDLLGSG…LQYLRGDATL (278 aa)) folds into the Protein kinase domain. Residues 361–369 (LGSGGFGRV) and Lys384 each bind ATP. Asp480 (proton acceptor) is an active-site residue.

In the C-terminal section; belongs to the protein kinase superfamily. Ser/Thr protein kinase family. This sequence in the N-terminal section; belongs to the leguminous lectin family.

It localises to the cell membrane. It carries out the reaction L-seryl-[protein] + ATP = O-phospho-L-seryl-[protein] + ADP + H(+). It catalyses the reaction L-threonyl-[protein] + ATP = O-phospho-L-threonyl-[protein] + ADP + H(+). The chain is L-type lectin-domain containing receptor kinase IV.3 (LECRK43) from Arabidopsis thaliana (Mouse-ear cress).